A 247-amino-acid polypeptide reads, in one-letter code: uncharacterized protein (247 aa).

Its subcellular location is the mitochondrion. This is an uncharacterized protein from Schizosaccharomyces pombe (strain 972 / ATCC 24843) (Fission yeast).